We begin with the raw amino-acid sequence, 215 residues long: Glycerol-3-phosphate acyltransferase (215 aa).

Helical transmembrane passes span 3–23 (LILL…LWIG), 42–61 (TNTF…LIDI), 68–90 (TLLP…FAVL), 110–130 (AGVL…VFVL), 134–154 (LFSM…ISVL), and 162–182 (LLPG…AIII).

It belongs to the PlsY family. As to quaternary structure, probably interacts with PlsX.

It is found in the cell membrane. It carries out the reaction an acyl phosphate + sn-glycerol 3-phosphate = a 1-acyl-sn-glycero-3-phosphate + phosphate. It participates in lipid metabolism; phospholipid metabolism. Its function is as follows. Catalyzes the transfer of an acyl group from acyl-phosphate (acyl-PO(4)) to glycerol-3-phosphate (G3P) to form lysophosphatidic acid (LPA). This enzyme utilizes acyl-phosphate as fatty acyl donor, but not acyl-CoA or acyl-ACP. This is Glycerol-3-phosphate acyltransferase from Streptococcus equi subsp. zooepidemicus (strain H70).